We begin with the raw amino-acid sequence, 1202 residues long: Metabotropic glycine receptor (1202 aa).

The signal sequence occupies residues 1–24 (MGAMAYSLLLCLLLAHLGLGEVGA). Residues 25-62 (SLDPSERPDSSRERTSRGKQHGQQLPRASAPDPSIPWS) form a disordered region. Over 25-417 (SLDPSERPDS…CFVQEDKYLR (393 aa)) the chain is Extracellular. Over residues 28-40 (PSERPDSSRERTS) the composition is skewed to basic and acidic residues. The interval 85 to 281 (YLYTGDFHQL…CENGSYKPGW (197 aa)) is cache-like region. Residues N98 and N143 are each glycosylated (N-linked (GlcNAc...) asparagine). The cysteines at positions 99 and 272 are disulfide-linked. Glycine contacts are provided by S172 and R173. A glycan (N-linked (GlcNAc...) asparagine) is linked at N215. The interval 234 to 253 (LHRRGSNQGPRGLGHSWRRR) is disordered. Glycine is bound at residue E271. The N-linked (GlcNAc...) asparagine glycan is linked to N274. D307 serves as a coordination point for glycine. N333 carries N-linked (GlcNAc...) asparagine glycosylation. The helical transmembrane segment at 418-439 (LAIISFQALCMLLDFVSMLVVY) threads the bilayer. The Cytoplasmic portion of the chain corresponds to 440–451 (HFRKAKSIRASG). Residues 452-474 (LILLETILFGSLLLYFPVVILYF) traverse the membrane as a helical segment. Over 475 to 478 (EPST) the chain is Extracellular. Residues 479–501 (FRCILLRWVRLLGFATVYGTVTL) traverse the membrane as a helical segment. Residues C481 and C573 are joined by a disulfide bond. The Cytoplasmic portion of the chain corresponds to 502–525 (KLHRVLKVFLSRTAQRIPYMTGGR). A helical membrane pass occupies residues 526–547 (VMRMLAVIVLVVFWFLVGWTSS). The Extracellular segment spans residues 548 to 576 (MCQNLERDILLVGQGQTSDNLTFNMCLID). A helical transmembrane segment spans residues 577-597 (RWDYMTAVAEFLFLLWGIYLC). Topologically, residues 598-611 (YAVRTVPSAFHEPR) are cytoplasmic. Residues 612–633 (YMAVAVHNELIITAIFHTIRFV) traverse the membrane as a helical segment. Topologically, residues 634-642 (LASRLQPDW) are extracellular. The helical transmembrane segment at 643-664 (MLMLYFAHTHLTVTVTIGLLLI) threads the bilayer. Over 665–1202 (PKFSHSSNNP…SASKIPGPRK (538 aa)) the chain is Cytoplasmic. 3 positions are modified to phosphoserine: S694, S705, and S708. Disordered stretches follow at residues 757–899 (RITE…TSML) and 914–995 (LGLA…QIKD). Composition is skewed to basic and acidic residues over residues 769–781 (CSKEDKEGTDHSA) and 819–828 (STYDHVRDQT). K774 participates in a covalent cross-link: Glycyl lysine isopeptide (Lys-Gly) (interchain with G-Cter in ubiquitin). Residues 845–856 (ENSTLESLSSKK) are compositionally biased toward low complexity. The residue at position 865 (S865) is a Phosphoserine. Residues 925-943 (MEDRAKSQKPQPKDRETNR) are compositionally biased toward basic and acidic residues. 2 stretches are compositionally biased toward polar residues: residues 944-958 (KYSNSDNTETNPNSN) and 975-994 (QRVNLPTANPDASSSTTQIK). S946 is subject to Phosphoserine. Positions 1002–1006 (VCPWE) match the VCPWE motif 1 motif. At S1061 the chain carries Phosphoserine. The VCPWE motif 2 motif lies at 1067-1071 (VCPWE). Phosphoserine is present on S1076. 2 stretches are compositionally biased toward polar residues: residues 1132–1144 (QMGDQEKQTSSSV) and 1151–1162 (CISSNNSPQPLT). The disordered stretch occupies residues 1132–1162 (QMGDQEKQTSSSVDIIPGSCISSNNSPQPLT). The short motif at 1167 to 1171 (VCPWE) is the VCPWE motif 3 element.

This sequence belongs to the G-protein coupled receptor 3 family. In terms of assembly, homodimer. Associates with the RGS7-GNB5 complex, promoting its localization to the cell membrane and regulating its GTPase activator activity. Interacts (via VCPWE motifs) with GNAO1. Interacts with GPC4. Interacts with EGFLAM.

The protein localises to the cell membrane. Its subcellular location is the postsynaptic cell membrane. It localises to the presynaptic cell membrane. It is found in the nucleus. Metabotropic receptor for glycine that controls synapse formation and function in the brain. Acts as an atypical G-protein coupled receptor that recruits and regulates the RGS7-GNB5 complex instead of activating G proteins. In absence of glycine ligand, promotes the GTPase activator activity of RGS7, increasing the GTPase activity of G protein alpha subunits, thereby driving them into their inactive GDP-bound form. Glycine-binding changes the conformation of the intracellular surface, inhibiting the GTPase activator activity of the RGS7-GNB5 complex, promoting G protein alpha subunits into their active GTP-bound form and regulating cAMP levels. Also able to bind taurine, a compound closely related to glycine, but with a two-fold lower affinity. Glycine receptor-dependent regulation of cAMP controls key ion channels, kinases and neurotrophic factors involved in neuronal excitability and synaptic transmission. Plays a pivotal role in regulating mood and cognition via its ability to regulate neuronal excitability in L2/L3 pyramidal neurons of the prefrontal cortex. Also involved in spatial learning by regulating hippocampal CA1 neuronal excitability. Acts as a synaptic organizer in the hippocampus, required for proper mossy fiber-CA3 neurocircuitry establishment, structure and function: induces presynaptic differentiation in contacting axons via its interaction with GPC4. In addition to glycine, may also act as a receptor for osteocalcin (BGLAP) hormone: osteocalcin-binding initiates a signaling response that prevents neuronal apoptosis in the hippocampus and regulates the synthesis of neurotransmitters. The chain is Metabotropic glycine receptor from Rattus norvegicus (Rat).